Reading from the N-terminus, the 102-residue chain is Vacuolar ATPase assembly integral membrane protein VMA21 homolog (102 aa).

Over 1–33 (MTTSSSSEPSTMATLFPNFRDQEVQSAVKNLLT) the chain is Cytoplasmic. Residues 34–54 (YSLVILIVPLASMFLLKQFFF) traverse the membrane as a helical segment. Residues 55–67 (EGLLGVSANDALT) lie on the Lumenal side of the membrane. A helical transmembrane segment spans residues 68-88 (YSAIIAVVLVHVVLGIWLFAA). Residues 89–102 (TKQEDRKKRENKQD) lie on the Cytoplasmic side of the membrane.

Belongs to the VMA21 family.

The protein localises to the endoplasmic reticulum membrane. It is found in the endoplasmic reticulum-Golgi intermediate compartment membrane. Its subcellular location is the cytoplasmic vesicle. It localises to the COPII-coated vesicle membrane. Its function is as follows. Required for the assembly of the V0 complex of the vacuolar ATPase (V-ATPase) in the endoplasmic reticulum. This Caenorhabditis elegans protein is Vacuolar ATPase assembly integral membrane protein VMA21 homolog.